We begin with the raw amino-acid sequence, 222 residues long: C-8 sterol isomerase ERG2 (222 aa).

A helical membrane pass occupies residues 3–23; the sequence is FFPLLLLIGVVGYIMNVLFTT.

It belongs to the ERG2 family.

It localises to the endoplasmic reticulum membrane. The catalysed reaction is fecosterol = episterol. The protein operates within steroid metabolism; ergosterol biosynthesis; ergosterol from zymosterol: step 2/5. Catalytic activity is inhibited by the morphilines tridemorph, fenpropimorph, and fenpropidin. In terms of biological role, C-8 sterol isomerase; part of the third module of ergosterol biosynthesis pathway that includes the late steps of the pathway. ERG2 catalyzes the reaction which results in unsaturation at C-7 in the B ring of sterols and thus converts fecosterol to episterol. The third module or late pathway involves the ergosterol synthesis itself through consecutive reactions that mainly occur in the endoplasmic reticulum (ER) membrane. Firstly, the squalene synthase ERG9 catalyzes the condensation of 2 farnesyl pyrophosphate moieties to form squalene, which is the precursor of all steroids. Squalene synthase is crucial for balancing the incorporation of farnesyl diphosphate (FPP) into sterol and nonsterol isoprene synthesis. Secondly, the squalene epoxidase ERG1 catalyzes the stereospecific oxidation of squalene to (S)-2,3-epoxysqualene, which is considered to be a rate-limiting enzyme in steroid biosynthesis. Then, the lanosterol synthase ERG7 catalyzes the cyclization of (S)-2,3 oxidosqualene to lanosterol, a reaction that forms the sterol core. In the next steps, lanosterol is transformed to zymosterol through a complex process involving various demethylation, reduction and desaturation reactions. The lanosterol 14-alpha-demethylase ERG11 (also known as CYP51) catalyzes C14-demethylation of lanosterol to produce 4,4'-dimethyl cholesta-8,14,24-triene-3-beta-ol, which is critical for ergosterol biosynthesis. The C-14 reductase ERG24 reduces the C14=C15 double bond of 4,4-dimethyl-cholesta-8,14,24-trienol to produce 4,4-dimethyl-cholesta-8,24-dienol. 4,4-dimethyl-cholesta-8,24-dienol is substrate of the C-4 demethylation complex ERG25-ERG26-ERG27 in which ERG25 catalyzes the three-step monooxygenation required for the demethylation of 4,4-dimethyl and 4alpha-methylsterols, ERG26 catalyzes the oxidative decarboxylation that results in a reduction of the 3-beta-hydroxy group at the C-3 carbon to an oxo group, and ERG27 is responsible for the reduction of the keto group on the C-3. ERG28 has a role as a scaffold to help anchor ERG25, ERG26 and ERG27 to the endoplasmic reticulum and ERG29 regulates the activity of the iron-containing C4-methylsterol oxidase ERG25. Then, the sterol 24-C-methyltransferase ERG6 catalyzes the methyl transfer from S-adenosyl-methionine to the C-24 of zymosterol to form fecosterol. The C-8 sterol isomerase ERG2 catalyzes the reaction which results in unsaturation at C-7 in the B ring of sterols and thus converts fecosterol to episterol. The sterol-C5-desaturase ERG3 then catalyzes the introduction of a C-5 double bond in the B ring to produce 5-dehydroepisterol. The C-22 sterol desaturase ERG5 further converts 5-dehydroepisterol into ergosta-5,7,22,24(28)-tetraen-3beta-ol by forming the C-22(23) double bond in the sterol side chain. Finally, ergosta-5,7,22,24(28)-tetraen-3beta-ol is substrate of the C-24(28) sterol reductase ERG4 to produce ergosterol. This Saccharomyces cerevisiae (strain ATCC 204508 / S288c) (Baker's yeast) protein is C-8 sterol isomerase ERG2.